A 213-amino-acid chain; its full sequence is PRA1 family protein B2 (213 aa).

Residues M1–P21 form a disordered region. The next 5 helical transmembrane spans lie at L75–L94, P98–F117, L137–L157, L161–F181, and A190–A210.

It belongs to the PRA1 family. In terms of assembly, interacts with PRA1B1, PRA1B3, PRA1B4, PRA1B5, PRA1B6 and PRA1E.

It localises to the endosome membrane. May be involved in both secretory and endocytic intracellular trafficking in the endosomal/prevacuolar compartments. This Arabidopsis thaliana (Mouse-ear cress) protein is PRA1 family protein B2 (PRA1B2).